The following is a 162-amino-acid chain: Beta-lactoglobulin-1 (162 aa).

Cystine bridges form between C66–C160 and C106–C119.

The protein belongs to the calycin superfamily. Lipocalin family. Monomer.

It is found in the secreted. Its function is as follows. Lactoglobulin is the primary component of whey, it binds retinol and is probably involved in the transport of that molecule. The polypeptide is Beta-lactoglobulin-1 (LGB1) (Felis catus (Cat)).